The chain runs to 128 residues: Fluoride-specific ion channel FluC (128 aa).

4 consecutive transmembrane segments (helical) span residues 5–25, 35–55, 67–87, and 96–116; these read IVAI…LGLA, LGTL…AVVF, LFVI…SVEV, and FGWA…LTAL. Na(+) contacts are provided by Gly-75 and Thr-78.

It belongs to the fluoride channel Fluc/FEX (TC 1.A.43) family.

It is found in the cell inner membrane. It catalyses the reaction fluoride(in) = fluoride(out). With respect to regulation, na(+) is not transported, but it plays an essential structural role and its presence is essential for fluoride channel function. Fluoride-specific ion channel. Important for reducing fluoride concentration in the cell, thus reducing its toxicity. This is Fluoride-specific ion channel FluC from Burkholderia vietnamiensis (strain G4 / LMG 22486) (Burkholderia cepacia (strain R1808)).